A 436-amino-acid chain; its full sequence is Putative ankyrin repeat protein FPV026 (436 aa).

ANK repeat units follow at residues 63 to 92 (EGIR…NVNE), 101 to 130 (TCYS…DVNN), 135 to 164 (LRNT…DQNI), 168 to 197 (NGNI…NLEI), 201 to 230 (NGRT…LVDS), and 234 to 266 (EGYT…FLNI). The F-box domain occupies 409–436 (TSTITNLPYEVIYIIVEKMTNKELCEIR).

The chain is Putative ankyrin repeat protein FPV026 from Fowlpox virus (strain NVSL) (FPV).